The chain runs to 474 residues: PRAME family member 1 (474 aa).

The stretch at 97–124 (RWKLQVLDLRDVDENFWARWPGAWALSC) is one LRR 1; degenerate repeat. An LRR 2; degenerate repeat occupies 179–203 (HLCCSKLVNYLTPIKYLRKSLKIIY). The LRR 3; degenerate repeat unit spans residues 204–230 (LNSIQELEIRNMSWPRLIRKLRCYLKE). One copy of the LRR 4; degenerate repeat lies at 231-265 (MKNLRKLVFSRCHHYTSDNELEGRLVAKFSSVFLR). 5 LRR repeats span residues 266 to 291 (LEHL…IRCL), 292 to 323 (QNPL…GYLK), 324 to 342 (HLNL…PLGA), 348 to 375 (AASL…GLSR), and 376 to 400 (CSQL…LLRH).

The protein belongs to the PRAME family.

The chain is PRAME family member 1 from Homo sapiens (Human).